The following is a 422-amino-acid chain: Lactose-binding protein (422 aa).

Positions 1-28 (MDYSRLLKRSVSAALTAAALLCSTAAFA) are cleaved as a signal peptide. Residues 246 to 277 (SNDGIRALTSGDVASVLRGVWITGTVKSQPDQ) form a lactose-binding region.

This sequence belongs to the bacterial solute-binding protein 1 family.

The protein localises to the periplasm. Part of the binding-protein-dependent transport system for lactose. The chain is Lactose-binding protein (lacE) from Rhizobium radiobacter (Agrobacterium tumefaciens).